Reading from the N-terminus, the 985-residue chain is UPF0182 protein Cgl0786/cg0896 (985 aa).

A run of 7 helical transmembrane segments spans residues 19–39, 63–83, 115–135, 176–196, 215–235, 262–282, and 290–310; these read VTWIFAIIALVILIAPMSVGF, IVLFVIFALIAGFVTWLAGYF, VMVIIPIFVALLAGLIGQRSW, SMMLIVAFLIALVGHYLMGGI, TQLAVTAGLWMLVKVAGYWLD, KIILLVIALFVAIAFFSAIFL, and LAVVLMLLSSVIIGAAWPLML. Positions 904–944 are disordered; that stretch reads KEAQDIEEVDGTATTPSTDETDTDTDQPATETPTAPVSEAE. Residues 929–939 are compositionally biased toward low complexity; sequence DQPATETPTAP.

This sequence belongs to the UPF0182 family.

Its subcellular location is the cell membrane. The sequence is that of UPF0182 protein Cgl0786/cg0896 from Corynebacterium glutamicum (strain ATCC 13032 / DSM 20300 / JCM 1318 / BCRC 11384 / CCUG 27702 / LMG 3730 / NBRC 12168 / NCIMB 10025 / NRRL B-2784 / 534).